The sequence spans 359 residues: DNA replication and repair protein RecF (359 aa).

30–37 (GPNGSGKT) provides a ligand contact to ATP.

The protein belongs to the RecF family.

The protein localises to the cytoplasm. Its function is as follows. The RecF protein is involved in DNA metabolism; it is required for DNA replication and normal SOS inducibility. RecF binds preferentially to single-stranded, linear DNA. It also seems to bind ATP. The chain is DNA replication and repair protein RecF from Aliivibrio fischeri (strain ATCC 700601 / ES114) (Vibrio fischeri).